The sequence spans 270 residues: tRNA pseudouridine synthase B (270 aa).

Catalysis depends on Asp-49, which acts as the Nucleophile.

This sequence belongs to the pseudouridine synthase TruB family. Type 1 subfamily.

The catalysed reaction is uridine(55) in tRNA = pseudouridine(55) in tRNA. Functionally, responsible for synthesis of pseudouridine from uracil-55 in the psi GC loop of transfer RNAs. The protein is tRNA pseudouridine synthase B of Bartonella quintana (strain Toulouse) (Rochalimaea quintana).